Reading from the N-terminus, the 179-residue chain is ATP synthase subunit delta (179 aa).

The protein belongs to the ATPase delta chain family. In terms of assembly, F-type ATPases have 2 components, F(1) - the catalytic core - and F(0) - the membrane proton channel. F(1) has five subunits: alpha(3), beta(3), gamma(1), delta(1), epsilon(1). F(0) has three main subunits: a(1), b(2) and c(10-14). The alpha and beta chains form an alternating ring which encloses part of the gamma chain. F(1) is attached to F(0) by a central stalk formed by the gamma and epsilon chains, while a peripheral stalk is formed by the delta and b chains.

Its subcellular location is the cell inner membrane. In terms of biological role, f(1)F(0) ATP synthase produces ATP from ADP in the presence of a proton or sodium gradient. F-type ATPases consist of two structural domains, F(1) containing the extramembraneous catalytic core and F(0) containing the membrane proton channel, linked together by a central stalk and a peripheral stalk. During catalysis, ATP synthesis in the catalytic domain of F(1) is coupled via a rotary mechanism of the central stalk subunits to proton translocation. Its function is as follows. This protein is part of the stalk that links CF(0) to CF(1). It either transmits conformational changes from CF(0) to CF(1) or is implicated in proton conduction. This Burkholderia pseudomallei (strain 1710b) protein is ATP synthase subunit delta.